The chain runs to 235 residues: MTELARLKFYATQPHPCSYLPEEQATTLFLDPSQPMDTQLYASLSEVGFRRSGDHLYRPHCQHCTACIAARIPVAGFSPNRQQRRILKRNAELQVIRKRPSFNEEYYDLYRRYIEQRHADGDMYPPSRDQFATFLVRDLPFCCFFEFRLHGRLLAIAVTDVLPNGLSAVYTFYDPDEEQRSLGRYAILWQIAETERLGLQAVYLGYWIKNCRKMNYKTQYRPIELFVNQRWVALT.

This sequence belongs to the R-transferase family. Bpt subfamily.

The protein resides in the cytoplasm. It carries out the reaction N-terminal L-glutamyl-[protein] + L-leucyl-tRNA(Leu) = N-terminal L-leucyl-L-glutamyl-[protein] + tRNA(Leu) + H(+). The enzyme catalyses N-terminal L-aspartyl-[protein] + L-leucyl-tRNA(Leu) = N-terminal L-leucyl-L-aspartyl-[protein] + tRNA(Leu) + H(+). Its function is as follows. Functions in the N-end rule pathway of protein degradation where it conjugates Leu from its aminoacyl-tRNA to the N-termini of proteins containing an N-terminal aspartate or glutamate. In Pseudomonas paraeruginosa (strain DSM 24068 / PA7) (Pseudomonas aeruginosa (strain PA7)), this protein is Aspartate/glutamate leucyltransferase.